A 109-amino-acid polypeptide reads, in one-letter code: Homeobox protein E60 (109 aa).

Residues 1-31 are disordered; the sequence is PRTRRVKRSDGRGNGGTPEEKRPRTAFSGEQ. A DNA-binding region (homeobox) is located at residues 20–79; sequence EKRPRTAFSGEQLARLKREFAENRYLTERRRQQLSRDLGLNEAQIKIWFQNKRAKIKKAS.

The protein belongs to the engrailed homeobox family.

The protein resides in the nucleus. The sequence is that of Homeobox protein E60 from Apis mellifera (Honeybee).